The primary structure comprises 402 residues: Advanced glycosylation end product-specific receptor (402 aa).

The signal sequence occupies residues 1–22; sequence MPTGTVARAWVLVLALWGAVAG. In terms of domain architecture, Ig-like V-type spans 23–109; the sequence is GQNITARIGE…ATNRLGKEVK (87 aa). The Extracellular portion of the chain corresponds to 23-341; sequence GQNITARIGE…DGSGLGTLAL (319 aa). Residues Asn-25 and Asn-80 are each glycosylated (N-linked (GlcNAc...) asparagine). Intrachain disulfides connect Cys-38–Cys-98 and Cys-143–Cys-206. Ig-like C2-type domains lie at 123–219 and 233–315; these read PEIV…RPLN and PEGI…PPVN. The chain crosses the membrane as a helical span at residues 342 to 362; it reads ALGILGGLGIAALLIGAILWR. Residues 363-402 lie on the Cytoplasmic side of the membrane; it reads KRQPRLEERKAPESQEDEEERAELNQSEEAEMPENGAGGP. The tract at residues 368–402 is disordered; it reads LEERKAPESQEDEEERAELNQSEEAEMPENGAGGP. Phosphoserine is present on residues Ser-376 and Ser-389. The segment covering 376-394 has biased composition (acidic residues); the sequence is SQEDEEERAELNQSEEAEM.

As to quaternary structure, constitutive homodimer; disulfide-linked. Forms homooligomers. Interacts with S100A1 and APP. Interacts with S100B, S100A12 and S100A14. Interacts with TIRAP. Interacts with HMGB1. Interacts with LGP2; this interaction plays an important role in AGER-mediated pro-inflammatory responses and cytokine release. Interacts with double-strand break repair protein MRE11 which is a core component of the MRN complex; the interaction enhances MRE11 endonuclease activity and promotes DNA repair. Interacts with the MCM2-7 complex via interaction with complex member MCM2; the interaction is increased following DNA replication stress and stabilizes the MCM2-7 complex at replication forks. In terms of processing, phosphorylated on its cytoplasmic domain by PKCzeta/PRKCZ upon ligand binding. Phosphorylated by ATM following DNA damage. Post-translationally, targeted by the ubiquitin E3 ligase subunit FBXO10 to mediate its ubiquitination and degradation. In terms of tissue distribution, endothelial cells and cardiomyocytes. Expressed in brain.

It localises to the cell membrane. The protein resides in the cell projection. It is found in the phagocytic cup. The protein localises to the early endosome. Its subcellular location is the nucleus. Functionally, cell surface pattern recognition receptor that senses endogenous stress signals with a broad ligand repertoire including advanced glycation end products, S100 proteins, high-mobility group box 1 protein/HMGB1, amyloid beta/APP oligomers, nucleic acids, histones, phospholipids and glycosaminoglycans. Advanced glycosylation end products are nonenzymatically glycosylated proteins which accumulate in vascular tissue in aging and at an accelerated rate in diabetes. These ligands accumulate at inflammatory sites during the pathogenesis of various diseases including diabetes, vascular complications, neurodegenerative disorders and cancers, and RAGE transduces their binding into pro-inflammatory responses. Upon ligand binding, uses TIRAP and MYD88 as adapters to transduce the signal ultimately leading to the induction of inflammatory cytokines IL6, IL8 and TNFalpha through activation of NF-kappa-B. Interaction with S100A12 on endothelium, mononuclear phagocytes, and lymphocytes triggers cellular activation, with generation of key pro-inflammatory mediators. Interaction with S100B after myocardial infarction may play a role in myocyte apoptosis by activating ERK1/2 and p53/TP53 signaling. Contributes to the translocation of amyloid-beta peptide (ABPP) across the cell membrane from the extracellular to the intracellular space in cortical neurons. ABPP-initiated RAGE signaling, especially stimulation of p38 mitogen-activated protein kinase (MAPK), has the capacity to drive a transport system delivering ABPP as a complex with RAGE to the intraneuronal space. Participates in endothelial albumin transcytosis together with HMGB1 through the RAGE/SRC/Caveolin-1 pathway, leading to endothelial hyperpermeability. Mediates the loading of HMGB1 in extracellular vesicles (EVs) that shuttle HMGB1 to hepatocytes by transferrin-mediated endocytosis and subsequently promote hepatocyte pyroptosis by activating the NLRP3 inflammasome. Binds to DNA and promotes extracellular hypomethylated DNA (CpG DNA) uptake by cells via the endosomal route to activate inflammatory responses. Mediates phagocytosis by non-professional phagocytes (NPP) and this is enhanced by binding to ligands including RNA, DNA, HMGB1 and histones. Promotes NPP-mediated phagocytosis of Saccharomyces cerevisiae spores by binding to RNA attached to the spore wall. Also promotes NPP-mediated phagocytosis of apoptotic cells. Following DNA damage, recruited to DNA double-strand break sites where it colocalizes with the MRN repair complex via interaction with double-strand break repair protein MRE11. Enhances the endonuclease activity of MRE11, promoting the end resection of damaged DNA. Promotes DNA damage repair in trophoblasts which enhances trophoblast invasion and contributes to placental development and maintenance. Protects cells from DNA replication stress by localizing to damaged replication forks where it stabilizes the MCM2-7 complex and promotes faithful progression of the replication fork. The polypeptide is Advanced glycosylation end product-specific receptor (Ager) (Rattus norvegicus (Rat)).